Reading from the N-terminus, the 304-residue chain is MANVKNFLTLFIEYLQIEKNYSKYTIVGYISSIEDFERFLHVQGIKGFEDVTYPDVRIFLTEAHEKGLTRRTISKKISALRSFYKFLLREKLVKENPFLLVSLPKQDKRIPKFLYEKELEELFEVSDLSTPLGQRNQALLEFLYATGMRVSELCSLKESDLDLFLDTVLVHGKGRKQRYIPFGSFAREALDLYLQNGRRILLLKAKEPCPFIFLNQRGGPLTPRGVRYILGELVKKTSGTLHIHPHMLRHTFATHLLNEGADLRSVQELLGHSNLSSTQVYTHVSKDMLRKTYMSHHPRAHKGK.

The Core-binding (CB) domain occupies 2–88 (ANVKNFLTLF…ALRSFYKFLL (87 aa)). The 186-residue stretch at 109–294 (RIPKFLYEKE…SKDMLRKTYM (186 aa)) folds into the Tyr recombinase domain. Residues R149, K173, H246, R249, and H272 contribute to the active site. The active-site O-(3'-phospho-DNA)-tyrosine intermediate is Y281.

Belongs to the 'phage' integrase family. XerC subfamily. In terms of assembly, forms a cyclic heterotetrameric complex composed of two molecules of XerC and two molecules of XerD.

The protein resides in the cytoplasm. Functionally, site-specific tyrosine recombinase, which acts by catalyzing the cutting and rejoining of the recombining DNA molecules. The XerC-XerD complex is essential to convert dimers of the bacterial chromosome into monomers to permit their segregation at cell division. It also contributes to the segregational stability of plasmids. In Bacillus licheniformis (strain ATCC 14580 / DSM 13 / JCM 2505 / CCUG 7422 / NBRC 12200 / NCIMB 9375 / NCTC 10341 / NRRL NRS-1264 / Gibson 46), this protein is Tyrosine recombinase XerC.